The sequence spans 144 residues: Large ribosomal subunit protein uL15 (144 aa).

The disordered stretch occupies residues M1 to L57. Residues R21–A31 are compositionally biased toward gly residues.

Belongs to the universal ribosomal protein uL15 family. Part of the 50S ribosomal subunit.

Binds to the 23S rRNA. The sequence is that of Large ribosomal subunit protein uL15 from Paraburkholderia xenovorans (strain LB400).